A 394-amino-acid polypeptide reads, in one-letter code: Phosphorylated adapter RNA export protein (394 aa).

Acidic residues predominate over residues 1–18; the sequence is MALEVGDMEDGQLSDSDS. The interval 1 to 33 is disordered; that stretch reads MALEVGDMEDGQLSDSDSDMTVAPSDRPLQLPK. Ala2 is modified (N-acetylalanine). Residues 2–329 are necessary for interaction with CBP80; the sequence is ALEVGDMEDG…KAARKRRTQV (328 aa). A phosphoserine mark is found at Ser14, Ser16, Ser65, Ser66, Ser69, and Ser73. A Nuclear localization signal motif is present at residues 81-84; sequence KRKR. Residues 83–111 form a disordered region; that stretch reads KRQKCFNPPPKPEPFQFGQSSQKPPVAGG. Positions 130-139 match the Nuclear export signal motif; the sequence is VATELGILGM. The segment covering 183–193 has biased composition (basic and acidic residues); that stretch reads KKMGSKEEENG. The tract at residues 183–211 is disordered; sequence KKMGSKEEENGQGHLKRKRPVKDRLGNRP. The Nuclear localization signal signature appears at 198–201; the sequence is KRKR. Ser226 bears the Phosphoserine mark. Positions 228-328 are sufficient for poly U RNA-binding; the sequence is EKVADEISFR…KKAARKRRTQ (101 aa). Positions 279–287 are necessary for poly U RNA-binding and snRNA export; sequence GSRRRTPGG. Residue Thr296 is modified to Phosphothreonine. Ser356 and Ser368 each carry phosphoserine.

Belongs to the PHAX family. Found in a U snRNA export complex with PHAX/RNUXA, NCBP1/CBP80, NCBP2/CBP20, RAN, XPO1 and m7G-capped RNA. Part of a precomplex with PHAX/RNUXA, NCBP1/CBP80, NCBP2/CBP20 and m7G-capped RNA. Interacts with NCBP1/CBP80. Found in a complex with snoRNA. Interacts with NCBP2/CBP20. Interacts with DDX39A; this interaction stimulates PHAX RNA binding activity. In terms of processing, phosphorylated in the nucleus. Dephosphorylated in the cytoplasm.

Its subcellular location is the nucleus. The protein resides in the nucleoplasm. It localises to the cajal body. It is found in the cytoplasm. Its function is as follows. A phosphoprotein adapter involved in the XPO1-mediated U snRNA export from the nucleus. Bridge components required for U snRNA export, the cap binding complex (CBC)-bound snRNA on the one hand and the GTPase Ran in its active GTP-bound form together with the export receptor XPO1 on the other. Its phosphorylation in the nucleus is required for U snRNA export complex assembly and export, while its dephosphorylation in the cytoplasm causes export complex disassembly. It is recycled back to the nucleus via the importin alpha/beta heterodimeric import receptor. The directionality of nuclear export is thought to be conferred by an asymmetric distribution of the GTP- and GDP-bound forms of Ran between the cytoplasm and nucleus. Its compartmentalized phosphorylation cycle may also contribute to the directionality of export. Binds strongly to m7G-capped U1 and U5 small nuclear RNAs (snRNAs) in a sequence-unspecific manner and phosphorylation-independent manner. Also plays a role in the biogenesis of U3 small nucleolar RNA (snoRNA). Involved in the U3 snoRNA transport from nucleoplasm to Cajal bodies. Binds strongly to m7G-capped U3, U8 and U13 precursor snoRNAs and weakly to trimethylated (TMG)-capped U3, U8 and U13 snoRNAs. Also binds to telomerase RNA. This is Phosphorylated adapter RNA export protein (PHAX) from Homo sapiens (Human).